Here is a 174-residue protein sequence, read N- to C-terminus: Large ribosomal subunit protein uL16 (174 aa).

This sequence belongs to the universal ribosomal protein uL16 family.

The chain is Large ribosomal subunit protein uL16 from Archaeoglobus fulgidus (strain ATCC 49558 / DSM 4304 / JCM 9628 / NBRC 100126 / VC-16).